Reading from the N-terminus, the 348-residue chain is Dihydroorotase (348 aa).

2 residues coordinate Zn(2+): His-14 and His-16. Substrate contacts are provided by residues 16–18 (HLR) and Asn-42. Lys-100, His-137, and His-175 together coordinate Zn(2+). Lys-100 bears the N6-carboxylysine mark. His-137 contributes to the substrate binding site. Residue Leu-220 coordinates substrate. Asp-248 is a Zn(2+) binding site. Asp-248 is a catalytic residue. 2 residues coordinate substrate: His-252 and Ala-264.

It belongs to the metallo-dependent hydrolases superfamily. DHOase family. Class II DHOase subfamily. As to quaternary structure, homodimer. The cofactor is Zn(2+).

It catalyses the reaction (S)-dihydroorotate + H2O = N-carbamoyl-L-aspartate + H(+). The protein operates within pyrimidine metabolism; UMP biosynthesis via de novo pathway; (S)-dihydroorotate from bicarbonate: step 3/3. Catalyzes the reversible cyclization of carbamoyl aspartate to dihydroorotate. The protein is Dihydroorotase of Pseudomonas fluorescens (strain SBW25).